The primary structure comprises 437 residues: Testis-specific Y-encoded-like protein 1 (437 aa).

The interval 1 to 81 (MSGLDGVKRT…QDAAGRGGTP (81 aa)) is disordered. Positions 11–26 (TPLQTHSIIISDQVPS) are enriched in polar residues. Residues 28-40 (QDAHQYLRLRDQS) are compositionally biased toward basic and acidic residues. Lys-156 participates in a covalent cross-link: Glycyl lysine isopeptide (Lys-Gly) (interchain with G-Cter in SUMO2).

This sequence belongs to the nucleosome assembly protein (NAP) family. In terms of processing, ubiquitinated by the CRL2(APPBP2) complex, which recognizes the Arg-Xaa-Xaa-Gly sequence at the C-terminus, leading to its degradation. In terms of tissue distribution, expressed in testis, ovary, liver, spleen, brain, kidney, prostate, lung, liver, and heart.

It localises to the nucleus. It is found in the nucleolus. This is Testis-specific Y-encoded-like protein 1 (TSPYL1) from Homo sapiens (Human).